Here is a 336-residue protein sequence, read N- to C-terminus: MPFKSLDELRAACLDLPAGSDTAAKAVASRQDTLTKPQGSLGRLETIAAWLARWQGRDMPKLDRVKVFVFAGNHGVTAQGVSAYPSEVTVQMVANFAGGGAAINQLARIAGAELDVIPLDLDHPTGDFTQVPAMDEKAFLAAVSAGYDAVTKDLDLVCFGEMGIGNTTPAAAISAALFGGGAEKWTGRGTGVDDAGLKRKVVAIEAGLKRHAAALADPLGVAAALGGRELAAIFGATLAARHLGIPVLLDGFVCTAAAAPLARLHPTGLSHTIAAHVSAESGHRRLLEALGLPPLLDLGMRLGEGSGACLAVNIVRSALECHARMASFAEAGVSEK.

The active-site Proton acceptor is the Glu-304.

Belongs to the CobT family.

The catalysed reaction is 5,6-dimethylbenzimidazole + nicotinate beta-D-ribonucleotide = alpha-ribazole 5'-phosphate + nicotinate + H(+). It participates in nucleoside biosynthesis; alpha-ribazole biosynthesis; alpha-ribazole from 5,6-dimethylbenzimidazole: step 1/2. Catalyzes the synthesis of alpha-ribazole-5'-phosphate from nicotinate mononucleotide (NAMN) and 5,6-dimethylbenzimidazole (DMB). This is Nicotinate-nucleotide--dimethylbenzimidazole phosphoribosyltransferase from Mesorhizobium japonicum (strain LMG 29417 / CECT 9101 / MAFF 303099) (Mesorhizobium loti (strain MAFF 303099)).